A 1365-amino-acid polypeptide reads, in one-letter code: Polyprotein ABA-1 (1365 aa).

It belongs to the NPA family. In terms of processing, nematode polyprotein allergens (NPAs) are synthesized as large polypeptides that are subsequently proteolytically cleaved to active polypeptide units. In terms of tissue distribution, pseudocoelomic fluid.

In terms of biological role, has high binding affinity for fatty acids and retinoids. This chain is Polyprotein ABA-1 (ABA-1), found in Ascaris suum (Pig roundworm).